The chain runs to 52 residues: uncharacterized protein (52 aa).

The interval 1-52 (MFGFIYRDPSPAPQGKIRDGSKDPKTPGGGGGGGGGISPNGGAPLGGKGFSM) is disordered. The span at 16 to 25 (KIRDGSKDPK) shows a compositional bias: basic and acidic residues. A compositionally biased stretch (gly residues) spans 27–52 (PGGGGGGGGGISPNGGAPLGGKGFSM).

This is an uncharacterized protein from Dictyostelium discoideum (Social amoeba).